The sequence spans 805 residues: Phenylalanine--tRNA ligase beta subunit (805 aa).

One can recognise a tRNA-binding domain in the interval 39–155; the sequence is VKVLGAFRIC…EDAPMGMRFI (117 aa). Positions 408-479 constitute a B5 domain; it reads DTSRAYRFDP…RVASLTKLQG (72 aa). D457, D463, E466, and E467 together coordinate Mg(2+). In terms of domain architecture, FDX-ACB spans 707 to 804; that stretch reads SDLQAVERDF…VAKATGATLR (98 aa).

This sequence belongs to the phenylalanyl-tRNA synthetase beta subunit family. Type 1 subfamily. Tetramer of two alpha and two beta subunits. Requires Mg(2+) as cofactor.

It localises to the cytoplasm. It catalyses the reaction tRNA(Phe) + L-phenylalanine + ATP = L-phenylalanyl-tRNA(Phe) + AMP + diphosphate + H(+). The chain is Phenylalanine--tRNA ligase beta subunit from Cereibacter sphaeroides (strain ATCC 17023 / DSM 158 / JCM 6121 / CCUG 31486 / LMG 2827 / NBRC 12203 / NCIMB 8253 / ATH 2.4.1.) (Rhodobacter sphaeroides).